The chain runs to 304 residues: Probable phytol kinase 2, chloroplastic (304 aa).

The transit peptide at 1-59 (MVSLISAHLLSLPSSAPRSRPQSRPPLSPPAAAAAASCSFDLPRPRRLVADGSRRKGTM) directs the protein to the chloroplast. The next 7 helical transmembrane spans lie at 68-88 (SGLAHDLGSAAVTAGVALALL), 113-133 (IGMVFLLFWPLFSSGSYAPFL), 134-154 (AAVAPGINIIRMLLLGLGVMK), 170-190 (ELLKGPLYYATTITFATSIFW), 194-214 (PIAIALICNLCAGDGIADIVG), 231-251 (AGSIAMALAGFMASIGYMHYF), and 256-276 (FIEESWSLAFGFLVVSVTAAL).

Belongs to the polyprenol kinase family.

Its subcellular location is the plastid. It localises to the chloroplast membrane. The catalysed reaction is phytol + CTP = phytyl phosphate + CDP + H(+). It participates in cofactor biosynthesis; tocopherol biosynthesis. In terms of biological role, involved in the activation and reutilization of phytol from chlorophyll degradation in plant metabolism, including tocopherol biosynthesis. Catalyzes the conversion of phytol to phytol monophosphate (PMP). The protein is Probable phytol kinase 2, chloroplastic of Oryza sativa subsp. japonica (Rice).